Here is a 506-residue protein sequence, read N- to C-terminus: MPRRPPFWLTLLIILIGLPLCLPFLYVILRATEVGLTRSVELLFRPRMAELLSNTMLLMVCVTIGAISLGTFCAFLLERYRFFGKAFFEVAMTLPLCIPAFVSGFTWISLTFRVEVFWGTIGIMTLSSFPLAYLPVSAILKRLDRSLEEVSLSLGKSPVYTFWYAISPQLKPAIGSSILLIALHMLVEFGAVSILNYQTFTTAIFQEYEMSFNNSTAALLSAVLMAICILIVFGEIFFRGKQTLYHSGKGVTRPYLVKTLSFGKQCLTFGFFSSIFILSIGVPVIMLIYWLIVGTSLESAGDFSEFLSAFSNSFIISGLGALLTVMCALPLVWAAVRYRSYLTIWIDRLPYLLHAVPGLVIALSLVYFSIHYANDLYQTFFVIIIAYFMLYLPMAQTTLRASLEQLSDQIEKVGQSLGRNPFYIFRTLTLPAILPGVAAAFALVFLNLMKELTATLLLTSNDIKTLSIAVWEHTSDAQYAAATPYALMLVLFSGIPVFLLKKYAFK.

A run of 12 helical transmembrane segments spans residues 9–29 (LTLLIILIGLPLCLPFLYVIL), 57–77 (LLMVCVTIGAISLGTFCAFLL), 90–110 (VAMTLPLCIPAFVSGFTWISL), 116–136 (VFWGTIGIMTLSSFPLAYLPV), 174–194 (IGSSILLIALHMLVEFGAVSI), 218–238 (ALLSAVLMAICILIVFGEIFF), 275–295 (IFILSIGVPVIMLIYWLIVGT), 314–334 (FIISGLGALLTVMCALPLVWA), 350–370 (PYLLHAVPGLVIALSLVYFSI), 379–399 (TFFVIIIAYFMLYLPMAQTTL), 428–448 (LTLPAILPGVAAAFALVFLNL), and 480–500 (AAATPYALMLVLFSGIPVFLL). The ABC transmembrane type-1 1 domain maps to 52 to 233 (LSNTMLLMVC…LMAICILIVF (182 aa)). The 191-residue stretch at 310–500 (FSNSFIISGL…LFSGIPVFLL (191 aa)) folds into the ABC transmembrane type-1 2 domain.

This sequence belongs to the binding-protein-dependent transport system permease family. FbpB subfamily. The complex is composed of two ATP-binding proteins (FbpC), two transmembrane proteins (FbpB) and a solute-binding protein (FbpA).

It localises to the cell inner membrane. Its function is as follows. Part of the ABC transporter complex FbpABC (TC 3.A.1.10.1) involved in Fe(3+) ions import. Probably responsible for the translocation of the substrate across the membrane. This is Fe(3+)-transport system permease protein FbpB 2 (fbpB2) from Haemophilus influenzae (strain ATCC 51907 / DSM 11121 / KW20 / Rd).